Here is an 856-residue protein sequence, read N- to C-terminus: TPR repeat-containing protein TP_0123 (856 aa).

TPR repeat units follow at residues tyrosine 107–aspartate 140, tyrosine 523–leucine 556, and threonine 603–tyrosine 636.

The protein is TPR repeat-containing protein TP_0123 of Treponema pallidum (strain Nichols).